The primary structure comprises 427 residues: Trigger factor (427 aa).

The PPIase FKBP-type domain occupies 163 to 248; that stretch reads GDTVILDFEG…LHEIKTKEVP (86 aa).

Belongs to the FKBP-type PPIase family. Tig subfamily.

The protein localises to the cytoplasm. It catalyses the reaction [protein]-peptidylproline (omega=180) = [protein]-peptidylproline (omega=0). Its function is as follows. Involved in protein export. Acts as a chaperone by maintaining the newly synthesized protein in an open conformation. Functions as a peptidyl-prolyl cis-trans isomerase. The polypeptide is Trigger factor (Listeria welshimeri serovar 6b (strain ATCC 35897 / DSM 20650 / CCUG 15529 / CIP 8149 / NCTC 11857 / SLCC 5334 / V8)).